Here is a 269-residue protein sequence, read N- to C-terminus: Putative hydro-lyase RL2444 (269 aa).

The protein belongs to the D-glutamate cyclase family.

The polypeptide is Putative hydro-lyase RL2444 (Rhizobium johnstonii (strain DSM 114642 / LMG 32736 / 3841) (Rhizobium leguminosarum bv. viciae)).